Reading from the N-terminus, the 378-residue chain is Ubiquitin-conjugating enzyme E2 Q2 (378 aa).

Residues 126–152 (DQPLPTGQNGTTEEVTSEEEEEEEMAE) form a disordered region. Over residues 140–152 (VTSEEEEEEEMAE) the composition is skewed to acidic residues. Residues 207–371 (QASDRLMKEL…VQIHEKNGWY (165 aa)) enclose the UBC core domain. The Glycyl thioester intermediate role is filled by cysteine 307.

It belongs to the ubiquitin-conjugating enzyme family. Post-translationally, auto-ubiquitinated in vitro.

It is found in the cytoplasm. The catalysed reaction is S-ubiquitinyl-[E1 ubiquitin-activating enzyme]-L-cysteine + [E2 ubiquitin-conjugating enzyme]-L-cysteine = [E1 ubiquitin-activating enzyme]-L-cysteine + S-ubiquitinyl-[E2 ubiquitin-conjugating enzyme]-L-cysteine.. It functions in the pathway protein modification; protein ubiquitination. Its function is as follows. Accepts ubiquitin from the E1 complex and catalyzes its covalent attachment to other proteins. In vitro catalyzes 'Lys-48'-linked polyubiquitination. The polypeptide is Ubiquitin-conjugating enzyme E2 Q2 (Ube2q2) (Mus musculus (Mouse)).